Consider the following 361-residue polypeptide: Putative dual-specificity RNA methyltransferase RlmN (361 aa).

Glu-91 acts as the Proton acceptor in catalysis. Residues Gln-97 to Arg-329 enclose the Radical SAM core domain. Residues Cys-111, Cys-115, and Cys-118 each coordinate [4Fe-4S] cluster. S-adenosyl-L-methionine is bound by residues Gly-163–Glu-164, Ser-195, Ser-218–His-220, and Thr-296.

It belongs to the radical SAM superfamily. RlmN family. The cofactor is [4Fe-4S] cluster.

It is found in the cytoplasm. It catalyses the reaction adenosine(2503) in 23S rRNA + 2 reduced [2Fe-2S]-[ferredoxin] + 2 S-adenosyl-L-methionine = 2-methyladenosine(2503) in 23S rRNA + 5'-deoxyadenosine + L-methionine + 2 oxidized [2Fe-2S]-[ferredoxin] + S-adenosyl-L-homocysteine. It carries out the reaction adenosine(37) in tRNA + 2 reduced [2Fe-2S]-[ferredoxin] + 2 S-adenosyl-L-methionine = 2-methyladenosine(37) in tRNA + 5'-deoxyadenosine + L-methionine + 2 oxidized [2Fe-2S]-[ferredoxin] + S-adenosyl-L-homocysteine. Functionally, specifically methylates position 2 of adenine 2503 in 23S rRNA and position 2 of adenine 37 in tRNAs. In Streptococcus pneumoniae (strain CGSP14), this protein is Putative dual-specificity RNA methyltransferase RlmN.